The chain runs to 789 residues: 1-phosphatidylinositol 4,5-bisphosphate phosphodiesterase delta-3 (789 aa).

Positions 63–172 constitute a PH domain; that stretch reads RAMLRGSRLR…WVRGLTKLRA (110 aa). Residues 73 to 101 are substrate binding; the sequence is KIRSRTWHKERLYRLQEDGLSVWFQRRIP. Ser-105 is modified (phosphoserine). EF-hand domains follow at residues 182–217, 218–253, and 250–285; these read RLDH…VNVD, MNDM…LLKR, and LLKR…QGEE. 10 residues coordinate Ca(2+): Asp-195, Asn-197, Asp-199, Lys-201, Glu-206, Asp-231, Ser-233, Asn-235, Arg-237, and Glu-242. Positions 337-482 constitute a PI-PLC X-box domain; sequence QDMNQPLAHY…LKGRVLVKGK (146 aa). His-352 is a catalytic residue. Positions 353, 382, and 384 each coordinate Ca(2+). His-397 is a catalytic residue. Residue Glu-431 coordinates Ca(2+). Residues 461–519 are disordered; sequence SPNPEELPSPEQLKGRVLVKGKKLPAARSEDGRALSDREEEEEDDEEEEEEVEAAAQRR. Substrate is bound by residues Lys-480 and Lys-482. Basic and acidic residues predominate over residues 488–497; sequence RSEDGRALSD. Ser-496 carries the phosphoserine modification. Positions 498–513 are enriched in acidic residues; sequence REEEEEDDEEEEEEVE. A PI-PLC Y-box domain is found at 528 to 644; sequence LSALAVYCHA…GYVLKPACLR (117 aa). Ser-557 provides a ligand contact to substrate. Phosphoserine is present on Ser-573. Position 584 (Arg-584) interacts with substrate. Residues 644 to 769 enclose the C2 domain; it reads RQPDSTFDPE…QGYRHIHLLS (126 aa). Residues Ile-683, Asp-685, Asn-709, Asp-738, Tyr-739, and Asp-740 each contribute to the Ca(2+) site.

It depends on Ca(2+) as a cofactor. In terms of tissue distribution, present in corneal epithelial cells (at protein level).

The protein resides in the membrane. Its subcellular location is the cytoplasm. The protein localises to the cleavage furrow. The enzyme catalyses a 1,2-diacyl-sn-glycero-3-phospho-(1D-myo-inositol-4,5-bisphosphate) + H2O = 1D-myo-inositol 1,4,5-trisphosphate + a 1,2-diacyl-sn-glycerol + H(+). Its activity is regulated as follows. Strongly activated by phosphatidic acid. Inhibited by phosphatidylethanolamine (PtdEtn), phosphatidylcholine (PtdCho), sphingomyelin and phosphatidylserine (PtdSer). Functionally, hydrolyzes the phosphatidylinositol 4,5-bisphosphate (PIP2) to generate 2 second messenger molecules diacylglycerol (DAG) and inositol 1,4,5-trisphosphate (IP3). DAG mediates the activation of protein kinase C (PKC), while IP3 releases Ca(2+) from intracellular stores. Essential for trophoblast and placental development. May participate in cytokinesis by hydrolyzing PIP2 at the cleavage furrow. Regulates neurite outgrowth through the inhibition of RhoA/Rho kinase signaling. The protein is 1-phosphatidylinositol 4,5-bisphosphate phosphodiesterase delta-3 of Homo sapiens (Human).